The primary structure comprises 57 residues: Plasma membrane proteolipid 3 (57 aa).

A helical transmembrane segment spans residues 34–54; it reads INILLTILGYLPGIVHALYII.

This sequence belongs to the UPF0057 (PMP3) family.

The protein resides in the cell membrane. In terms of biological role, plays a role in the regulation of membrane potential. Could mediate a proton leak. The protein is Plasma membrane proteolipid 3 (pmp-1) of Neurospora crassa (strain ATCC 24698 / 74-OR23-1A / CBS 708.71 / DSM 1257 / FGSC 987).